Reading from the N-terminus, the 472-residue chain is Regulator of G-protein signaling 6 (472 aa).

Residues 40 to 115 (KTGGVPIRTV…DDGTFYRFQA (76 aa)) form the DEP domain. Positions 261–330 (IRKQITFLNA…MSKEPSQQRV (70 aa)) constitute a G protein gamma domain. Residues 336–441 (SFDEILKDQV…LMKSDSYARF (106 aa)) enclose the RGS domain.

Interacts with GNB5. Interacts with RGS7BP, leading to regulate the subcellular location of the heterodimer formed with GNB5. Interacts with GNAI1.

It localises to the cytoplasm. The protein localises to the cytosol. It is found in the membrane. The protein resides in the nucleus. Its subcellular location is the cell membrane. In terms of biological role, regulates G protein-coupled receptor signaling cascades. Inhibits signal transduction by increasing the GTPase activity of G protein alpha subunits, thereby driving them into their inactive GDP-bound form. The RGS6/GNB5 dimer enhances GNAO1 GTPase activity. The polypeptide is Regulator of G-protein signaling 6 (RGS6) (Homo sapiens (Human)).